The chain runs to 294 residues: RAB7A-interacting MON1-CCZ1 complex subunit 1 (294 aa).

Residue A2 is modified to N-acetylalanine.

It belongs to the RIMOC1 family. As to quaternary structure, interacts with the MON1A-CCZ1B complex. Interacts with GDP-bound RAB7A and promotes its interaction with the MON1A-CCZ1B complex.

The protein localises to the cytoplasm. It localises to the cytosol. In terms of biological role, plays an important role in the removal of damaged mitochondria via mitophagy by controlling the stability and localization of RAB7A. Required for the recruitment of RAB7A and ATG9A vesicles to damaged mitochondria and promotes the stability of RAB7A by inhibiting its proteasomal degradation during mitophagy. The protein is RAB7A-interacting MON1-CCZ1 complex subunit 1 of Mus musculus (Mouse).